The chain runs to 274 residues: Diaminopimelate epimerase (274 aa).

Substrate contacts are provided by N11, Q44, and N64. Residue C73 is the Proton donor of the active site. Substrate contacts are provided by residues 74–75 (GN), N157, N190, and 208–209 (ER). The active-site Proton acceptor is the C217. 218–219 (GS) is a substrate binding site.

This sequence belongs to the diaminopimelate epimerase family. In terms of assembly, homodimer.

The protein resides in the cytoplasm. It carries out the reaction (2S,6S)-2,6-diaminopimelate = meso-2,6-diaminopimelate. The protein operates within amino-acid biosynthesis; L-lysine biosynthesis via DAP pathway; DL-2,6-diaminopimelate from LL-2,6-diaminopimelate: step 1/1. In terms of biological role, catalyzes the stereoinversion of LL-2,6-diaminopimelate (L,L-DAP) to meso-diaminopimelate (meso-DAP), a precursor of L-lysine and an essential component of the bacterial peptidoglycan. This Escherichia coli O6:H1 (strain CFT073 / ATCC 700928 / UPEC) protein is Diaminopimelate epimerase.